A 173-amino-acid polypeptide reads, in one-letter code: MILTFARSLYTQGQYNGKIREYFYYVSHNGFLFLDDSRMKNFTAAYKDIQFLNFFYRKIKENKTGRYEDTFPWVSLCGIERNFLRCDDTPLVYTELDSTEKELRIGQSTIYHSFQPSSLSMNSSGRVYHKCPIGGKALVADKLTDKLYRRFRFDDDGVPVGFQCGEQIIELKK.

Belongs to the UPF0598 family.

This chain is UPF0598 protein F59C6.12, found in Caenorhabditis elegans.